The chain runs to 349 residues: Phosphoribosylformylglycinamidine cyclo-ligase (349 aa).

It belongs to the AIR synthase family.

The protein localises to the cytoplasm. It catalyses the reaction 2-formamido-N(1)-(5-O-phospho-beta-D-ribosyl)acetamidine + ATP = 5-amino-1-(5-phospho-beta-D-ribosyl)imidazole + ADP + phosphate + H(+). The protein operates within purine metabolism; IMP biosynthesis via de novo pathway; 5-amino-1-(5-phospho-D-ribosyl)imidazole from N(2)-formyl-N(1)-(5-phospho-D-ribosyl)glycinamide: step 2/2. In Methanococcus maripaludis (strain C7 / ATCC BAA-1331), this protein is Phosphoribosylformylglycinamidine cyclo-ligase.